Consider the following 220-residue polypeptide: Uracil-DNA glycosylase (220 aa).

Aspartate 61 acts as the Proton acceptor in catalysis.

Belongs to the uracil-DNA glycosylase (UDG) superfamily. UNG family.

It localises to the cytoplasm. The enzyme catalyses Hydrolyzes single-stranded DNA or mismatched double-stranded DNA and polynucleotides, releasing free uracil.. Its function is as follows. Excises uracil residues from the DNA which can arise as a result of misincorporation of dUMP residues by DNA polymerase or due to deamination of cytosine. The polypeptide is Uracil-DNA glycosylase (Glaesserella parasuis serovar 5 (strain SH0165) (Haemophilus parasuis)).